The sequence spans 115 residues: NADH-ubiquinone oxidoreductase chain 3 (115 aa).

3 consecutive transmembrane segments (helical) span residues 3 to 23, 55 to 75, and 84 to 104; these read LMLT…IAFW, FFLV…LLPL, and LNTM…SLAY.

Belongs to the complex I subunit 3 family. Core subunit of respiratory chain NADH dehydrogenase (Complex I) which is composed of 45 different subunits. Interacts with TMEM186. Interacts with TMEM242.

It is found in the mitochondrion inner membrane. The catalysed reaction is a ubiquinone + NADH + 5 H(+)(in) = a ubiquinol + NAD(+) + 4 H(+)(out). In terms of biological role, core subunit of the mitochondrial membrane respiratory chain NADH dehydrogenase (Complex I) which catalyzes electron transfer from NADH through the respiratory chain, using ubiquinone as an electron acceptor. Essential for the catalytic activity of complex I. This chain is NADH-ubiquinone oxidoreductase chain 3, found in Equus asinus (Donkey).